The chain runs to 570 residues: Glutamate--tRNA ligase (570 aa).

A 'HIGH' region motif is present at residues 107–117; that stretch reads PNPDFVLHLGS.

The protein belongs to the class-I aminoacyl-tRNA synthetase family. Glutamate--tRNA ligase type 2 subfamily.

It is found in the cytoplasm. The enzyme catalyses tRNA(Glu) + L-glutamate + ATP = L-glutamyl-tRNA(Glu) + AMP + diphosphate. Catalyzes the attachment of glutamate to tRNA(Glu) in a two-step reaction: glutamate is first activated by ATP to form Glu-AMP and then transferred to the acceptor end of tRNA(Glu). This is Glutamate--tRNA ligase from Pyrobaculum calidifontis (strain DSM 21063 / JCM 11548 / VA1).